Reading from the N-terminus, the 123-residue chain is Ragulator complex protein LAMTOR3-A (123 aa).

The protein belongs to the LAMTOR3 family. In terms of assembly, part of the Ragulator complex composed of lamtor1, lamtor2, lamtor3, lamtor4 and lamtor5. The Ragulator complex interacts with slc38a9; the probable amino acid sensor. Component of the lysosomal folliculin complex (LFC).

The protein resides in the late endosome membrane. Functionally, as part of the Ragulator complex it is involved in amino acid sensing and activation of mTORC1, a signaling complex promoting cell growth in response to growth factors, energy levels, and amino acids. Activated by amino acids through a mechanism involving the lysosomal V-ATPase, the Ragulator plays a dual role for the small GTPases Rag (RagA/RRAGA, RagB/RRAGB, RagC/RRAGC and/or RagD/RRAGD): it (1) acts as a guanine nucleotide exchange factor (GEF), activating the small GTPases Rag and (2) mediates recruitment of Rag GTPases to the lysosome membrane. Activated Ragulator and Rag GTPases function as a scaffold recruiting mTORC1 to lysosomes where it is in turn activated. The chain is Ragulator complex protein LAMTOR3-A (lamtor3-a) from Xenopus laevis (African clawed frog).